A 121-amino-acid chain; its full sequence is Large ribosomal subunit protein bL12 (121 aa).

It belongs to the bacterial ribosomal protein bL12 family. In terms of assembly, homodimer. Part of the ribosomal stalk of the 50S ribosomal subunit. Forms a multimeric L10(L12)X complex, where L10 forms an elongated spine to which 2 to 4 L12 dimers bind in a sequential fashion. Binds GTP-bound translation factors.

Forms part of the ribosomal stalk which helps the ribosome interact with GTP-bound translation factors. Is thus essential for accurate translation. The sequence is that of Large ribosomal subunit protein bL12 from Pseudomonas savastanoi pv. phaseolicola (strain 1448A / Race 6) (Pseudomonas syringae pv. phaseolicola (strain 1448A / Race 6)).